Consider the following 113-residue polypeptide: U11-theraphotoxin-Hhn1k (113 aa).

The N-terminal stretch at 1-21 (MNTVRVTFLLVFVLAVSLGQA) is a signal peptide. The propeptide occupies 22–74 (DKDENRMEMQEKTEQGKSYLDFAENLLLQKLEELEAKLLEEDSEESRNSRQKR). Positions 61–83 (EEDSEESRNSRQKRCIGEGVPCD) are disordered. 3 disulfides stabilise this stretch: Cys75-Cys90, Cys82-Cys95, and Cys89-Cys110.

Belongs to the neurotoxin 14 (magi-1) family. 01 (HNTX-16) subfamily. Expressed by the venom gland.

The protein localises to the secreted. Probable ion channel inhibitor. This chain is U11-theraphotoxin-Hhn1k, found in Cyriopagopus hainanus (Chinese bird spider).